Consider the following 226-residue polypeptide: ATP synthase F(0) complex subunit a (226 aa).

Transmembrane regions (helical) follow at residues P12–P32, W68–L88, Q97–L117, I138–V158, L182–L202, and E203–H223.

The protein belongs to the ATPase A chain family. In terms of assembly, component of the ATP synthase complex composed at least of ATP5F1A/subunit alpha, ATP5F1B/subunit beta, ATP5MC1/subunit c (homooctomer), MT-ATP6/subunit a, MT-ATP8/subunit 8, ATP5ME/subunit e, ATP5MF/subunit f, ATP5MG/subunit g, ATP5MK/subunit k, ATP5MJ/subunit j, ATP5F1C/subunit gamma, ATP5F1D/subunit delta, ATP5F1E/subunit epsilon, ATP5PF/subunit F6, ATP5PB/subunit b, ATP5PD/subunit d, ATP5PO/subunit OSCP. ATP synthase complex consists of a soluble F(1) head domain (subunits alpha(3) and beta(3)) - the catalytic core - and a membrane F(0) domain - the membrane proton channel (subunits c, a, 8, e, f, g, k and j). These two domains are linked by a central stalk (subunits gamma, delta, and epsilon) rotating inside the F1 region and a stationary peripheral stalk (subunits F6, b, d, and OSCP). Interacts with DNAJC30; interaction is direct.

The protein resides in the mitochondrion inner membrane. It carries out the reaction H(+)(in) = H(+)(out). In terms of biological role, subunit a, of the mitochondrial membrane ATP synthase complex (F(1)F(0) ATP synthase or Complex V) that produces ATP from ADP in the presence of a proton gradient across the membrane which is generated by electron transport complexes of the respiratory chain. ATP synthase complex consist of a soluble F(1) head domain - the catalytic core - and a membrane F(1) domain - the membrane proton channel. These two domains are linked by a central stalk rotating inside the F(1) region and a stationary peripheral stalk. During catalysis, ATP synthesis in the catalytic domain of F(1) is coupled via a rotary mechanism of the central stalk subunits to proton translocation. With the subunit c (ATP5MC1), forms the proton-conducting channel in the F(0) domain, that contains two crucial half-channels (inlet and outlet) that facilitate proton movement from the mitochondrial intermembrane space (IMS) into the matrix. Protons are taken up via the inlet half-channel and released through the outlet half-channel, following a Grotthuss mechanism. The chain is ATP synthase F(0) complex subunit a from Pongo abelii (Sumatran orangutan).